The chain runs to 137 residues: Large ribosomal subunit protein uL16c (137 aa).

Belongs to the universal ribosomal protein uL16 family. As to quaternary structure, part of the 50S ribosomal subunit.

It is found in the plastid. Its subcellular location is the chloroplast. The polypeptide is Large ribosomal subunit protein uL16c (Vigna unguiculata (Cowpea)).